Here is a 147-residue protein sequence, read N- to C-terminus: FAD synthase (147 aa).

ATP-binding positions include 13–14, 18–21, Asp-100, and Phe-127; these read TF and HEGH.

This sequence belongs to the archaeal FAD synthase family. In terms of assembly, homodimer. The cofactor is a divalent metal cation.

The catalysed reaction is FMN + ATP + H(+) = FAD + diphosphate. It participates in cofactor biosynthesis; FAD biosynthesis; FAD from FMN: step 1/1. Functionally, catalyzes the transfer of the AMP portion of ATP to flavin mononucleotide (FMN) to produce flavin adenine dinucleotide (FAD) coenzyme. The sequence is that of FAD synthase from Korarchaeum cryptofilum (strain OPF8).